The sequence spans 255 residues: Tabinhibitin 2 (255 aa).

The first 23 residues, 1–23, serve as a signal peptide directing secretion; that stretch reads MISILVSRFLLAALVLQYATIDA. Residues 32–34 carry the Cell attachment site motif; the sequence is RGD. The SCP domain maps to 67–211; sequence LSKINDVRDH…KARALLTCNF (145 aa).

It belongs to the CRISP family. In terms of tissue distribution, expressed in salivary glands.

It is found in the secreted. In terms of biological role, inhibits platelet aggregation induced by all agonists tested (ADP, arachidonic acid, the thromboxane A2 analog U46619, thrombin, and snake venom snaclecs (TMVA that activates platelet through GPIB, and stejnulxin that specifically acts through GPVI (GP6))). May act by competing with fibrinogen for binding to glycoprotein IIb/IIIa (ITGA2B/ITGB3). The sequence is that of Tabinhibitin 2 from Tabanus yao (Horsefly).